The primary structure comprises 691 residues: Beta-galactosidase III (691 aa).

2 residues coordinate substrate: arginine 121 and asparagine 159. The Proton donor role is filled by glutamate 160. Glutamate 318 serves as the catalytic Nucleophile. Residues tryptophan 326 and glutamate 366 to histidine 369 contribute to the substrate site.

It belongs to the glycosyl hydrolase 42 family.

It catalyses the reaction Hydrolysis of terminal non-reducing beta-D-galactose residues in beta-D-galactosides.. Its function is as follows. Specific for beta-D-anomer-linked galactoside substrates. Hydrolyzes o-nitrophenyl-beta-D-galactopyranoside (ONPG), chromogen 5-bromo-4-chloro-3-indolyl-beta-D-galactopyranoside (X-gal) and to a lesser extent lactose. Hydrolyzes p-nitrophenyl-beta-D-galacturonide very slightly. Does not hydrolyze maltose, sucrose, raffinose or melibiose. Has some transgalactosylation activity yielding galacto-oligosaccharides (GaOS), including O-beta-D-galactopyranosyl-(1,3)-O-beta-D-galactopyranosyl-(1-4)-D-glucopyranose. The sequence is that of Beta-galactosidase III from Bifidobacterium longum subsp. infantis.